A 628-amino-acid chain; its full sequence is Pinene synthase, chloroplastic (628 aa).

A chloroplast-targeting transit peptide spans 1–36 (MALVSTAPLASKSCLHKSLISSTHELKALSRTIPAL). Mg(2+) contacts are provided by Asp-379, Asp-383, and Asp-531. A DDXXD motif motif is present at residues 379-383 (DDMYD).

The protein belongs to the terpene synthase family. Tpsd subfamily. It depends on Mg(2+) as a cofactor. Mn(2+) serves as cofactor. K(+) is required as a cofactor.

The protein localises to the plastid. The protein resides in the chloroplast. It catalyses the reaction (2E)-geranyl diphosphate = (1S,5S)-alpha-pinene + diphosphate. The catalysed reaction is (2E)-geranyl diphosphate = (1S,5S)-beta-pinene + diphosphate. It participates in terpene metabolism; oleoresin biosynthesis. Involved in defensive oleoresin formation in conifers in response to insect attack or other injury. Involved in monoterpene (C10) olefins biosynthesis. A mixture of alpha- and beta-pinene is produced by this enzyme. The chain is Pinene synthase, chloroplastic (ag3) from Abies grandis (Grand fir).